Consider the following 316-residue polypeptide: Cilia-and flagella-associated protein 96 (316 aa).

The tract at residues 220 to 242 is disordered; sequence EEKKEVSFKPFKPSSPGKKAGGM. Residues 227-237 are compositionally biased toward low complexity; sequence FKPFKPSSPGK.

It belongs to the CFAP96 family.

It is found in the cytoplasm. It localises to the cytoskeleton. The protein resides in the microtubule organizing center. The protein localises to the centrosome. The protein is Cilia-and flagella-associated protein 96 (Cfap96) of Mus musculus (Mouse).